We begin with the raw amino-acid sequence, 377 residues long: Lactosylceramide 1,3-N-acetyl-beta-D-glucosaminyltransferase (377 aa).

The Cytoplasmic segment spans residues 1 to 14; it reads MRVFVSSRRVKRWQ. Residues 15–35 traverse the membrane as a helical; Signal-anchor for type II membrane protein segment; it reads FFHLFAICFILSFMVFWGPIN. Over 36–377 the chain is Lumenal; the sequence is NYIMSHMKSY…NSYPCRAAFA (342 aa). The N-linked (GlcNAc...) asparagine glycan is linked to Asn-58.

This sequence belongs to the glycosyltransferase 31 family.

It localises to the golgi apparatus membrane. The enzyme catalyses a beta-D-Gal-(1-&gt;4)-beta-D-Glc-(1&lt;-&gt;1)-Cer(d18:1(4E)) + UDP-N-acetyl-alpha-D-glucosamine = a beta-D-GlcNAc-(1-&gt;3)-beta-D-Gal-(1-&gt;4)-beta-D-Glc-(1&lt;-&gt;1)-Cer(d18:1(4E)) + UDP + H(+). It carries out the reaction a neolactoside nLc4Cer(d18:1(4E)) + UDP-N-acetyl-alpha-D-glucosamine = a neolactoside IV(3)-beta-GlcNAc-nLc4Cer(d18:1(4E)) + UDP + H(+). Its pathway is protein modification; protein glycosylation. Its function is as follows. Beta-1,3-N-acetylglucosaminyltransferase that plays a key role in the synthesis of lacto- or neolacto-series carbohydrate chains on glycolipids, notably by participating in biosynthesis of HNK-1 and Lewis X carbohydrate structures. Has strong activity toward lactosylceramide (LacCer) and neolactotetraosylceramide (nLc(4)Cer; paragloboside), resulting in the synthesis of Lc(3)Cer and neolactopentaosylceramide (nLc(5)Cer), respectively. Probably plays a central role in regulating neolacto-series glycolipid synthesis during embryonic development. The protein is Lactosylceramide 1,3-N-acetyl-beta-D-glucosaminyltransferase of Rattus norvegicus (Rat).